The chain runs to 358 residues: Trace amine-associated receptor 7e (358 aa).

The Extracellular segment spans residues 1–47 (MATGDDSFLWDQDSILSRDLFSATSAELCYENLNRSCVRSPYSPGPR). Residue Asn-34 is glycosylated (N-linked (GlcNAc...) asparagine). 2 disulfide bridges follow: Cys-37-Cys-201 and Cys-120-Cys-205. The helical transmembrane segment at 48-68 (LILYAVFGFGAVLAVCGNLLV) threads the bilayer. Over 69–83 (MTSILHFRQLHSPAN) the chain is Cytoplasmic. The helical transmembrane segment at 84–104 (FLVASLACADFLVGLTVMPFS) threads the bilayer. The Extracellular portion of the chain corresponds to 105–121 (TVRSVEGCWYFGEIYCK). A helical transmembrane segment spans residues 122–143 (LHTCFDVSFCSSSIFHLCFISV). Residues 144 to 166 (DRYIAVSDPLIYPTRFTASVSNK) lie on the Cytoplasmic side of the membrane. Residues 167–187 (CITFSWLLSISYGFSLIYTGA) traverse the membrane as a helical segment. Over 188–212 (SEAGLEDLVSALTCVGGCQLAVNQS) the chain is Extracellular. N-linked (GlcNAc...) asparagine glycosylation occurs at Asn-210. A helical membrane pass occupies residues 213-233 (WVFINFLLFLIPTLVMITVYS). The Cytoplasmic segment spans residues 234–274 (KIFLIAKQQAQNIEKMSKQTARASDSYKDRVAKRERKAAKT). A helical membrane pass occupies residues 275–295 (LGIAVAAFLLSWLPYFIDSFI). Residues 296-309 (DAFLGFITPTYVYE) lie on the Extracellular side of the membrane. The helical transmembrane segment at 310–333 (ILVWIAYYNSAMNPLIYAFFYPWF) threads the bilayer. At 334–358 (RKAIKLTVTGKILRENSSTTNLFPE) the chain is on the cytoplasmic side.

It belongs to the G-protein coupled receptor 1 family. In terms of tissue distribution, specifically expressed in neurons of the olfactory epithelium.

Its subcellular location is the cell membrane. Its function is as follows. Olfactory receptor specific for N,N-dimethylalkylamines trace amines. Trace amine compounds are enriched in animal body fluids and act on trace amine-associated receptors (TAARs) to elicit both intraspecific and interspecific innate behaviors. Ligand-binding causes a conformation change that triggers signaling via G(s)-class of G alpha proteins (GNAL or GNAS). The sequence is that of Trace amine-associated receptor 7e from Mus musculus (Mouse).